Here is a 1279-residue protein sequence, read N- to C-terminus: ATP-dependent helicase/nuclease subunit A (1279 aa).

The UvrD-like helicase ATP-binding domain occupies Thr4–Arg499. Residue Ala25 to Thr32 coordinates ATP. One can recognise a UvrD-like helicase C-terminal domain in the interval Glu526–Gly853.

Belongs to the helicase family. AddA subfamily. In terms of assembly, heterodimer of AddA and AddB/RexB. Mg(2+) serves as cofactor.

The catalysed reaction is Couples ATP hydrolysis with the unwinding of duplex DNA by translocating in the 3'-5' direction.. It catalyses the reaction ATP + H2O = ADP + phosphate + H(+). Functionally, the heterodimer acts as both an ATP-dependent DNA helicase and an ATP-dependent, dual-direction single-stranded exonuclease. Recognizes the chi site generating a DNA molecule suitable for the initiation of homologous recombination. The AddA nuclease domain is required for chi fragment generation; this subunit has the helicase and 3' -&gt; 5' nuclease activities. The protein is ATP-dependent helicase/nuclease subunit A of Clostridium botulinum (strain Loch Maree / Type A3).